The sequence spans 187 residues: Probable chorismate pyruvate-lyase (187 aa).

Substrate contacts are provided by Arg-80, Leu-118, and Glu-170.

The protein belongs to the UbiC family.

The protein resides in the cytoplasm. The enzyme catalyses chorismate = 4-hydroxybenzoate + pyruvate. It functions in the pathway cofactor biosynthesis; ubiquinone biosynthesis. In terms of biological role, removes the pyruvyl group from chorismate, with concomitant aromatization of the ring, to provide 4-hydroxybenzoate (4HB) for the ubiquinone pathway. The polypeptide is Probable chorismate pyruvate-lyase (Pseudomonas fluorescens (strain ATCC BAA-477 / NRRL B-23932 / Pf-5)).